A 424-amino-acid chain; its full sequence is Otefin (424 aa).

In terms of domain architecture, LEM spans 1–30 (MADVDDFDSLSNAELRAKMLAQGLPNIPVT). The tract at residues 1–50 (MADVDDFDSLSNAELRAKMLAQGLPNIPVTDSSRKVLVKRLRASIGGQAS) is required for binding to Med and germline stem cell maintenance. Residues 42 to 186 (RASIGGQASP…SSKRADREEN (145 aa)) are disordered. A phosphoserine mark is found at Ser-44, Ser-50, and Ser-54. Thr-63 is subject to Phosphothreonine. The span at 65–80 (APAPGAPSAPAAASTP) shows a compositional bias: low complexity. Residues 92–99 (ATKARRTI) carry the Nuclear localization signal motif. The span at 103–133 (EAKEPVRRLPEEAIRRRPDEADRLRSEEPVA) shows a compositional bias: basic and acidic residues. A Phosphoserine modification is found at Ser-152. Positions 157–170 (SERKVVEPLRKPET) are enriched in basic and acidic residues. A phosphoserine mark is found at Ser-192 and Ser-198. The disordered stretch occupies residues 259 to 278 (PSVPSARAQTTSSTRSYDYA). Low complexity predominate over residues 262–274 (PSARAQTTSSTRS). The required for binding to Med stretch occupies residues 271-400 (STRSYDYASN…NRWLNSLEQK (130 aa)). The residue at position 321 (Ser-321) is a Phosphoserine. Thr-324 is subject to Phosphothreonine. Residue Ser-326 is modified to Phosphoserine. The residue at position 358 (Thr-358) is a Phosphothreonine. 2 positions are modified to phosphoserine: Ser-378 and Ser-385. The segment at 400 to 424 (KYHIKSKLFIVLLVLLLIGVYYIFY) is essential for nuclear membrane localization and germline stem cell maintenance. An essential for nuclear membrane localization region spans residues 406–424 (KLFIVLLVLLLIGVYYIFY).

Interacts with Med. Interacts with Lam. Interacts with aurA, alphaTub84B, gammaTub23C and gammaTub37C. Interacts with Nemp. Phosphorylation at Thr-63 by aurA may be required for exit from mitosis. May be phosphorylated by Cdk1 and Pka-C1. In terms of tissue distribution, expressed in all cell types of the germarium and testis. Expressed in nurse cells, follicle cells and oocytes.

It is found in the nucleus inner membrane. The protein localises to the nucleus. It localises to the nucleoplasm. Its subcellular location is the cytoplasm. The protein resides in the chromosome. It is found in the cytoskeleton. The protein localises to the spindle pole. It localises to the microtubule organizing center. Its subcellular location is the centrosome. In terms of biological role, inner nuclear membrane protein. Involved in the attachment of membrane vesicles to chromatin during nuclear assembly, and is probably required for centrosome maturation and cell cycle progression during mitosis. Essential for differentiation of certain tissues and the maintenance of progenitor cell populations. Required for the differentiation and maintenance of male and female germline stem cells (GSCs), as well as the maintenance of somatic cells in the GSC niche. This role is likely to be independent of the BMP (Dpp) pathway that negatively regulates bam transcription during GSC differentiation. During development, plays essential and redundant functions with the other LEM domain proteins; bocks and MAN1. Also has a redundant but important role with bocks during larval development. The polypeptide is Otefin (Drosophila melanogaster (Fruit fly)).